The following is a 258-amino-acid chain: Acetylglutamate kinase (258 aa).

Residues 44–45, arginine 66, and asparagine 158 each bind substrate; that span reads GG. ATP is bound by residues 181-186 and 209-211; these read DVSGIL and IIT.

Belongs to the acetylglutamate kinase family. ArgB subfamily. In terms of assembly, homodimer.

Its subcellular location is the cytoplasm. The catalysed reaction is N-acetyl-L-glutamate + ATP = N-acetyl-L-glutamyl 5-phosphate + ADP. It participates in amino-acid biosynthesis; L-arginine biosynthesis; N(2)-acetyl-L-ornithine from L-glutamate: step 2/4. Functionally, catalyzes the ATP-dependent phosphorylation of N-acetyl-L-glutamate. This chain is Acetylglutamate kinase, found in Klebsiella pneumoniae subsp. pneumoniae (strain ATCC 700721 / MGH 78578).